The chain runs to 831 residues: Translation initiation factor IF-2 (831 aa).

Over residues 1–11 (MADEIKKENAP) the composition is skewed to basic and acidic residues. The disordered stretch occupies residues 1 to 236 (MADEIKKENA…GKHAKKASAL (236 aa)). Residues 22–31 (TTVSGTSTTG) are compositionally biased toward low complexity. 2 stretches are compositionally biased toward basic and acidic residues: residues 49–150 (DLER…RYAD) and 157–166 (DNGKLDDYSD). Residues 190–200 (RSKNKVVKAKK) show a composition bias toward basic residues. The span at 201–225 (GGRDDENGNKNERQSDRRNQKDVKG) shows a compositional bias: basic and acidic residues. Residues 330 to 500 (HRAPVVTIMG…LLQSEVLELT (171 aa)) enclose the tr-type G domain. Residues 339 to 346 (GHVDHGKT) are G1. 339 to 346 (GHVDHGKT) serves as a coordination point for GTP. Residues 364–368 (GITQH) form a G2 region. Positions 386–389 (DTPG) are G3. Residues 386-390 (DTPGH) and 440-443 (NKID) contribute to the GTP site. The tract at residues 440 to 443 (NKID) is G4. Positions 476-478 (SAK) are G5.

It belongs to the TRAFAC class translation factor GTPase superfamily. Classic translation factor GTPase family. IF-2 subfamily.

It is found in the cytoplasm. One of the essential components for the initiation of protein synthesis. Protects formylmethionyl-tRNA from spontaneous hydrolysis and promotes its binding to the 30S ribosomal subunits. Also involved in the hydrolysis of GTP during the formation of the 70S ribosomal complex. This Histophilus somni (strain 2336) (Haemophilus somnus) protein is Translation initiation factor IF-2.